A 350-amino-acid polypeptide reads, in one-letter code: uncharacterized protein (350 aa).

Residues 1–27 (MKNKKRVLIASSLSCAILLLSAATTQA) form the signal peptide. The disordered stretch occupies residues 28–71 (NSAHKDSQDQNKKEHVDKSQQKEKRNVTNKDKNSTVPDDIGKNG). Basic and acidic residues predominate over residues 30–60 (AHKDSQDQNKKEHVDKSQQKEKRNVTNKDKN).

The protein belongs to the aerolysin family.

This is an uncharacterized protein from Staphylococcus aureus (strain MSSA476).